The sequence spans 99 residues: uncharacterized protein (99 aa).

A signal peptide spans 1 to 17 (MMMNSFFPAMALMVLVG). Cys18 carries N-palmitoyl cysteine lipidation. The S-diacylglycerol cysteine moiety is linked to residue Cys18.

It is found in the cell membrane. This is an uncharacterized protein from Escherichia coli O157:H7.